The following is a 307-amino-acid chain: Methionyl-tRNA formyltransferase (307 aa).

108–111 provides a ligand contact to (6S)-5,6,7,8-tetrahydrofolate; the sequence is SLLP.

The protein belongs to the Fmt family.

It catalyses the reaction L-methionyl-tRNA(fMet) + (6R)-10-formyltetrahydrofolate = N-formyl-L-methionyl-tRNA(fMet) + (6S)-5,6,7,8-tetrahydrofolate + H(+). Functionally, attaches a formyl group to the free amino group of methionyl-tRNA(fMet). The formyl group appears to play a dual role in the initiator identity of N-formylmethionyl-tRNA by promoting its recognition by IF2 and preventing the misappropriation of this tRNA by the elongation apparatus. This is Methionyl-tRNA formyltransferase from Renibacterium salmoninarum (strain ATCC 33209 / DSM 20767 / JCM 11484 / NBRC 15589 / NCIMB 2235).